Reading from the N-terminus, the 1012-residue chain is Klotho (1012 aa).

Residues 1–33 (MPASAPPRRPRPPPPSLSLLLVLLGLGGRRLRA) form the signal peptide. The Extracellular segment spans residues 34–981 (EPGDGAQTWA…ECSFFHTRKS (948 aa)). 2 glycosyl hydrolase-1 regions span residues 57–506 (FQGT…KNGF) and 515–953 (LEGT…SNGF). 7 N-linked (GlcNAc...) asparagine glycosylation sites follow: Asn-106, Asn-159, Asn-283, Asn-344, Asn-607, Asn-612, and Asn-694. A helical transmembrane segment spans residues 982–1002 (LLAFIAFLFFASIISLSLIFY). The Cytoplasmic portion of the chain corresponds to 1003 to 1012 (YSKKGRRSYK).

The protein belongs to the glycosyl hydrolase 1 family. Klotho subfamily. As to quaternary structure, homodimer. Interacts with FGF23 and FGFR1. N-glycosylated. In terms of tissue distribution, present in cortical renal tubules (at protein level). Soluble peptide is present in serum and cerebrospinal fluid. Expressed in kidney, placenta, small intestine and prostate. Down-regulated in renal cell carcinomas, hepatocellular carcinomas, and in chronic renal failure kidney.

Its subcellular location is the cell membrane. It is found in the apical cell membrane. The protein localises to the secreted. The catalysed reaction is a beta-D-glucuronoside + H2O = D-glucuronate + an alcohol. In terms of biological role, may have weak glycosidase activity towards glucuronylated steroids. However, it lacks essential active site Glu residues at positions 239 and 872, suggesting it may be inactive as a glycosidase in vivo. May be involved in the regulation of calcium and phosphorus homeostasis by inhibiting the synthesis of active vitamin D. Essential factor for the specific interaction between FGF23 and FGFR1. The Klotho peptide generated by cleavage of the membrane-bound isoform may be an anti-aging circulating hormone which would extend life span by inhibiting insulin/IGF1 signaling. The polypeptide is Klotho (KL) (Homo sapiens (Human)).